The following is a 133-amino-acid chain: MKAFSPVRSVRKSSLTEHSLGIARSKTPVDDPMSLLYNMNDCYSKLKELVPSIPQNKKVSKMEILQHVIDYILDLQLTLDSHPSIVSLHHLPRVGGNTSRTPLTPLNTDISILSLQAAEFSSEFTDESKSLCP.

The bHLH domain maps to 23-75 (ARSKTPVDDPMSLLYNMNDCYSKLKELVPSIPQNKKVSKMEILQHVIDYILDL). Positions 106–115 (LNTDISILSL) match the Nuclear export signal motif.

In terms of assembly, heterodimer with other HLH proteins. As to expression, in the embryo, expressed in a range of tissues, with primary expression in the developing pronephros; expressed in the pronephric anlage, and by the swimming tadpole stages expressed robustly in the pronephric tubules and weakly in the pronephric duct. Expressed in the secondary heart field. In the developing nervous system, expressed in the neural crest and in the neural folds during neurula stages, and at stage 20 in the neural tube, ventral mesoderm and mid-hindbrain boundary. By early tailbud stages, expressed in the neural tube, somites and branchial arches. In tadpoles (stage 37/38), expressed in the heart, eye, otic vesicle, somites and branchial arches. Also expressed in migrating muscle cells. Expressed at a low level in limbs, with expression decreasing as limbs develop, but expressed at a high level in blastemas (regenerated limbs), where expression is localized primarily to the blastemal epidermis. Widely expressed in adults with highest expression in the spleen, skin, intestine and brain, and at a much lower level in testis and heart.

It localises to the cytoplasm. Its subcellular location is the nucleus. Transcriptional regulator (lacking a basic DNA binding domain) which negatively regulates the basic helix-loop-helix (bHLH) transcription factors by forming heterodimers and inhibiting their DNA binding and transcriptional activity. Inhibits the activity of both neurogenic (neurod1/neuroD) and myogenic (myod1/myoD) bHLH factors. May play a role in the regulation of the circadian clock. The protein is DNA-binding protein inhibitor ID-2-A (id2-a) of Xenopus laevis (African clawed frog).